The primary structure comprises 589 residues: Leucine-rich repeat and immunoglobulin-like domain-containing nogo receptor-interacting protein 3 (589 aa).

The first 23 residues, 1 to 23 (MTCWLHMLGLHLLLLPTAPLAAG), serve as a signal peptide directing secretion. One can recognise an LRRNT domain in the interval 24 to 53 (CPARCECSASTRTVACGRRRLTAIPEGIPA). At 24–528 (CPARCECSAS…LDLTTILVST (505 aa)) the chain is on the extracellular side. LRR repeat units follow at residues 54–75 (ETRM…DLAS), 78–99 (TLEE…AFAN), 102–123 (RLRV…VFTH), 126–147 (SLTL…SFQD), 150–171 (SLQR…AFAG), 174–195 (GLAE…SLGH), 206–227 (HLAI…SHLE), 246–267 (NLTS…ALRQ), 270–291 (HLTC…SFRD), 294–315 (RLRE…AFVG), and 318–339 (QIRL…TFHS). Asn184 is a glycosylation site (N-linked (GlcNAc...) asparagine). 3 N-linked (GlcNAc...) asparagine glycosylation sites follow: Asn246, Asn256, and Asn275. N-linked (GlcNAc...) asparagine glycosylation occurs at Asn323. The LRRCT domain maps to 351-405 (NPLACDCRLLWIVQRRKTLNFDGRLPACATPAEVRGDALHNLPDSVLFEYFVCRK). The region spanning 406–495 (PKIRERRLQH…GNDTYFATLT (90 aa)) is the Ig-like C2-type domain. Cys428 and Cys479 are joined by a disulfide. 3 N-linked (GlcNAc...) asparagine glycosylation sites follow: Asn487, Asn501, and Asn509. A helical transmembrane segment spans residues 529-549 (AMGCITFLGVVLFCFLLLFVW). Over 550-589 (SRGRGQHKNNFSVEYSFRKVDGPAAAAGQGGARKFNMKMI) the chain is Cytoplasmic.

Its subcellular location is the membrane. The chain is Leucine-rich repeat and immunoglobulin-like domain-containing nogo receptor-interacting protein 3 (Lingo3) from Mus musculus (Mouse).